Reading from the N-terminus, the 423-residue chain is Transcription factor bHLH14 (423 aa).

Residues 192–243 (GKTTKHTNQTGSYPKPAVSDHSKSGNQQFGSERKRRRKLETTRVAAATKEKH) form a disordered region. One can recognise a bHLH domain in the interval 245 to 294 (PAVLSHVEAEKQRREKLNHRFYALRAIVPKVSRMDKASLLSDAVSYIESL). The segment at 312 to 343 (ETDKLDNSSSNTSPSSVEYQVNQKPSKSNRGS) is disordered. The span at 318–327 (NSSSNTSPSS) shows a compositional bias: low complexity. Positions 328 to 342 (VEYQVNQKPSKSNRG) are enriched in polar residues.

Homodimer.

It localises to the nucleus. This Arabidopsis thaliana (Mouse-ear cress) protein is Transcription factor bHLH14 (BHLH14).